The primary structure comprises 493 residues: Probable mannosyl-oligosaccharide alpha-1,2-mannosidase 1B (493 aa).

Residues 1–18 (MHLPSLSVALALVSSSLA) form the signal peptide. Residues Asn87 and Asn174 are each glycosylated (N-linked (GlcNAc...) asparagine). The cysteines at positions 324 and 353 are disulfide-linked. Glu367 acts as the Proton donor in catalysis. An N-linked (GlcNAc...) asparagine glycan is attached at Asn489.

It belongs to the glycosyl hydrolase 47 family. Monomer. It depends on Ca(2+) as a cofactor. Mg(2+) serves as cofactor.

It localises to the cytoplasmic vesicle lumen. It carries out the reaction N(4)-(alpha-D-Man-(1-&gt;2)-alpha-D-Man-(1-&gt;2)-alpha-D-Man-(1-&gt;3)-[alpha-D-Man-(1-&gt;2)-alpha-D-Man-(1-&gt;3)-[alpha-D-Man-(1-&gt;2)-alpha-D-Man-(1-&gt;6)]-alpha-D-Man-(1-&gt;6)]-beta-D-Man-(1-&gt;4)-beta-D-GlcNAc-(1-&gt;4)-beta-D-GlcNAc)-L-asparaginyl-[protein] (N-glucan mannose isomer 9A1,2,3B1,2,3) + 4 H2O = N(4)-(alpha-D-Man-(1-&gt;3)-[alpha-D-Man-(1-&gt;3)-[alpha-D-Man-(1-&gt;6)]-alpha-D-Man-(1-&gt;6)]-beta-D-Man-(1-&gt;4)-beta-D-GlcNAc-(1-&gt;4)-beta-D-GlcNAc)-L-asparaginyl-[protein] (N-glucan mannose isomer 5A1,2) + 4 beta-D-mannose. The catalysed reaction is N(4)-(alpha-D-Man-(1-&gt;2)-alpha-D-Man-(1-&gt;2)-alpha-D-Man-(1-&gt;3)-[alpha-D-Man-(1-&gt;3)-[alpha-D-Man-(1-&gt;2)-alpha-D-Man-(1-&gt;6)]-alpha-D-Man-(1-&gt;6)]-beta-D-Man-(1-&gt;4)-beta-D-GlcNAc-(1-&gt;4)-beta-D-GlcNAc)-L-asparaginyl-[protein] (N-glucan mannose isomer 8A1,2,3B1,3) + 3 H2O = N(4)-(alpha-D-Man-(1-&gt;3)-[alpha-D-Man-(1-&gt;3)-[alpha-D-Man-(1-&gt;6)]-alpha-D-Man-(1-&gt;6)]-beta-D-Man-(1-&gt;4)-beta-D-GlcNAc-(1-&gt;4)-beta-D-GlcNAc)-L-asparaginyl-[protein] (N-glucan mannose isomer 5A1,2) + 3 beta-D-mannose. It participates in protein modification; protein glycosylation. Functionally, involved in the maturation of Asn-linked oligosaccharides. Progressively trims alpha-1,2-linked mannose residues from Man(9)GlcNAc(2) to produce Man(5)GlcNAc(2). The chain is Probable mannosyl-oligosaccharide alpha-1,2-mannosidase 1B (mns1B) from Neosartorya fischeri (strain ATCC 1020 / DSM 3700 / CBS 544.65 / FGSC A1164 / JCM 1740 / NRRL 181 / WB 181) (Aspergillus fischerianus).